The primary structure comprises 233 residues: Rab-like protein 3 (233 aa).

Residues 1 to 233 (MASLDRVKVL…RFNFKSLHSD (233 aa)) are small GTPase-like. Residues 16-21 (GVGKSS), 148-150 (KFD), and 179-180 (DC) contribute to the GTP site.

It belongs to the small GTPase superfamily. Rab family. Homodimer.

Its function is as follows. Required for KRAS signaling regulation and modulation of cell proliferation. Regulator of KRAS prenylation, and probably prenylation of other small GTPases. Required for lymphocyte development and function. Not required for myeloid cell development. The sequence is that of Rab-like protein 3 (rabl3) from Danio rerio (Zebrafish).